The following is a 609-amino-acid chain: Neutral protease (609 aa).

The first 24 residues, 1–24 (MNKTQRHINWLLAVSAATALPVTA), serve as a signal peptide directing secretion. Positions 25-196 (AEMINVNDGS…VLQTWDGLNH (172 aa)) are excised as a propeptide. His343 serves as a coordination point for Zn(2+). Glu344 is an active-site residue. Zn(2+) is bound by residues His347 and Glu367. His426 acts as the Proton donor in catalysis.

Belongs to the peptidase M4 family. Zn(2+) is required as a cofactor.

The protein resides in the secreted. It carries out the reaction Preferential cleavage of bonds with bulky hydrophobic groups in P2 and P1'. Phe at P1' is the most favored residue, which distinguished this enzyme from thermolysin.. Extracellular zinc metalloprotease. This chain is Neutral protease (nprV), found in Vibrio proteolyticus (Aeromonas proteolytica).